The following is a 275-amino-acid chain: Large ribosomal subunit protein uL2 (275 aa).

The tract at residues P227 to K261 is disordered.

This sequence belongs to the universal ribosomal protein uL2 family. In terms of assembly, part of the 50S ribosomal subunit. Forms a bridge to the 30S subunit in the 70S ribosome.

In terms of biological role, one of the primary rRNA binding proteins. Required for association of the 30S and 50S subunits to form the 70S ribosome, for tRNA binding and peptide bond formation. It has been suggested to have peptidyltransferase activity; this is somewhat controversial. Makes several contacts with the 16S rRNA in the 70S ribosome. This is Large ribosomal subunit protein uL2 from Xylella fastidiosa (strain M23).